The chain runs to 272 residues: 2-amino-3,7-dideoxy-D-threo-hept-6-ulosonate synthase (272 aa).

Asp-33 acts as the Proton acceptor in catalysis. Residues 33 to 37 (DHGVS) and 153 to 155 (YPR) each bind 1-deoxy-D-threo-hexo-2,5-diulose 6-phosphate. Tyr-153 serves as the catalytic Proton donor. Lys-184 (schiff-base intermediate with substrate) is an active-site residue. Residues 209–210 (GG) and 237–238 (GR) contribute to the 1-deoxy-D-threo-hexo-2,5-diulose 6-phosphate site.

This sequence belongs to the DeoC/FbaB aldolase family. ADHS subfamily. In terms of assembly, homodecamer.

It carries out the reaction 1-deoxy-D-threo-hexo-2,5-diulose 6-phosphate + L-aspartate 4-semialdehyde = 2,3-dioxopropyl phosphate + 2-amino-2,3,7-trideoxy-D-lyxo-hept-6-ulosonate. Functionally, catalyzes a transaldol reaction between 6-deoxy-5-ketofructose 1-phosphate (DKFP) and L-aspartate semialdehyde (ASA) with an elimination of hydroxypyruvaldehyde phosphate to yield 2-amino-3,7-dideoxy-D-threo-hept-6-ulosonate (ADH). Plays a key role in an alternative pathway of the biosynthesis of 3-dehydroquinate (DHQ), which is involved in the canonical pathway for the biosynthesis of aromatic amino acids. In Methanococcus maripaludis (strain C7 / ATCC BAA-1331), this protein is 2-amino-3,7-dideoxy-D-threo-hept-6-ulosonate synthase.